The primary structure comprises 110 residues: UPF0060 membrane protein Noc_2955 (110 aa).

Helical transmembrane passes span 7 to 27 (VGLF…AYLW), 33 to 53 (TIWL…LLSL), 63 to 83 (AAYG…VNGI), and 87 to 107 (TWDL…MFAP).

This sequence belongs to the UPF0060 family.

It localises to the cell inner membrane. This is UPF0060 membrane protein Noc_2955 from Nitrosococcus oceani (strain ATCC 19707 / BCRC 17464 / JCM 30415 / NCIMB 11848 / C-107).